The following is a 438-amino-acid chain: Adenylosuccinate synthetase (438 aa).

Residues 13–19 (GDEGKGK) and 41–43 (GHT) contribute to the GTP site. Asp-14 serves as the catalytic Proton acceptor. Mg(2+) is bound by residues Asp-14 and Gly-41. Residues 14-17 (DEGK), 39-42 (NAGH), Thr-130, Arg-144, Gln-225, Thr-240, and Arg-312 each bind IMP. The Proton donor role is filled by His-42. Position 308-314 (308-314 (ATTGRQR)) interacts with substrate. Residues Arg-314, 340–342 (KLD), and 422–424 (STG) each bind GTP.

It belongs to the adenylosuccinate synthetase family. Homodimer. Mg(2+) is required as a cofactor.

The protein localises to the cytoplasm. The enzyme catalyses IMP + L-aspartate + GTP = N(6)-(1,2-dicarboxyethyl)-AMP + GDP + phosphate + 2 H(+). It participates in purine metabolism; AMP biosynthesis via de novo pathway; AMP from IMP: step 1/2. Plays an important role in the de novo pathway of purine nucleotide biosynthesis. Catalyzes the first committed step in the biosynthesis of AMP from IMP. The sequence is that of Adenylosuccinate synthetase from Vesicomyosocius okutanii subsp. Calyptogena okutanii (strain HA).